The chain runs to 129 residues: Large-conductance mechanosensitive channel (129 aa).

3 consecutive transmembrane segments (helical) span residues 8–28 (FAFR…AAFS), 30–50 (IIKS…IGGI), and 67–87 (GQFL…FLFV).

It belongs to the MscL family. As to quaternary structure, homopentamer.

Its subcellular location is the cell membrane. Channel that opens in response to stretch forces in the membrane lipid bilayer. May participate in the regulation of osmotic pressure changes within the cell. This Exiguobacterium sibiricum (strain DSM 17290 / CCUG 55495 / CIP 109462 / JCM 13490 / 255-15) protein is Large-conductance mechanosensitive channel.